The following is a 796-amino-acid chain: Histone-lysine N-methyltransferase PRDM9 (796 aa).

Residues methionine 1–glutamate 23 are disordered. Residues lysine 27–asparagine 90 enclose the KRAB-related domain. The interval serine 149–lysine 172 is disordered. Residues cysteine 209, cysteine 212, cysteine 220, and histidine 223 each contribute to the Zn(2+) site. In terms of domain architecture, SET spans proline 248–glycine 362. S-adenosyl-L-methionine contacts are provided by residues alanine 260–leucine 262, tyrosine 295, and asparagine 324–cysteine 325. Asparagine 292 to leucine 298 provides a ligand contact to substrate. Tyrosine 361 is a binding site for substrate. Lysine 372 carries the post-translational modification N6,N6,N6-trimethyllysine; alternate. Lysine 372 is subject to N6-methyllysine; alternate. 2 positions are modified to N6-methyllysine: lysine 376 and lysine 378. The C2H2-type 1 zinc finger occupies histidine 392–histidine 415. Residues cysteine 394, cysteine 397, histidine 410, and histidine 415 each coordinate Zn(2+). Basic and acidic residues predominate over residues phenylalanine 443–lysine 457. The disordered stretch occupies residues phenylalanine 443 to arginine 497. Positions arginine 458–arginine 468 are enriched in basic residues. Residues glutamine 469–lysine 480 are compositionally biased toward polar residues. Residues glutamate 481–arginine 497 are compositionally biased toward basic and acidic residues. A C2H2-type 2; degenerate zinc finger spans residues glutamine 522 to histidine 540. 9 C2H2-type zinc fingers span residues tyrosine 546–histidine 568, tyrosine 574–histidine 596, tyrosine 602–histidine 624, tyrosine 630–histidine 652, tyrosine 658–histidine 680, tyrosine 686–histidine 708, tyrosine 714–histidine 736, tyrosine 742–histidine 764, and tyrosine 770–histidine 792. 12 residues coordinate Zn(2+): cysteine 716, cysteine 719, histidine 732, histidine 736, cysteine 744, cysteine 747, histidine 760, histidine 764, cysteine 772, cysteine 775, histidine 788, and histidine 792.

It belongs to the class V-like SAM-binding methyltransferase superfamily. As to quaternary structure, homodimer. Interacts with EHMT2 and CDYL; interaction only takes place when PRDM9 is bound to hotspot DNA. Interacts with CXXC1; this interaction does not link PRDM9-activated recombination hotspot sites with DSB machinery and is not required for the hotspot recognition pathway. Forms a complex with EWSR1, REC8, SYCP3 and SYCP1; complex formation is dependent of phosphorylated form of REC8 and requires PRDM9 bound to hotspot DNA; EWSR1 joins PRDM9 with the chromosomal axis through REC8. Mono-methylated; automethylated. Tri-methylated; automethylated. Mono-methylation is predominant; automethylation is lower and slower than H3 peptide methylation and is in a highest S-adenosyl-L-methionine concentration-dependent. There are two major sites for automethylation at Lys-372 and Lys-378. Lysines can be simultaneously methylated, such as Lys-372(me3)/Lys-376(me1), Lys-372(me1)/Lys-378(me1) and Lys-372(me1)/Lys-376(me1)/Lys-378(me1). Automethylation is an intramolecular (cis) process.

The protein resides in the nucleus. It is found in the chromosome. It catalyses the reaction L-lysyl-[protein] + S-adenosyl-L-methionine = N(6)-methyl-L-lysyl-[protein] + S-adenosyl-L-homocysteine + H(+). The enzyme catalyses N(6)-methyl-L-lysyl-[protein] + S-adenosyl-L-methionine = N(6),N(6)-dimethyl-L-lysyl-[protein] + S-adenosyl-L-homocysteine + H(+). It carries out the reaction L-lysyl(4)-[histone H3] + 3 S-adenosyl-L-methionine = N(6),N(6),N(6)-trimethyl-L-lysyl(4)-[histone H3] + 3 S-adenosyl-L-homocysteine + 3 H(+). The catalysed reaction is L-lysyl(36)-[histone H3] + 3 S-adenosyl-L-methionine = N(6),N(6),N(6)-trimethyl-L-lysyl(36)-[histone H3] + 3 S-adenosyl-L-homocysteine + 3 H(+). It catalyses the reaction L-lysyl(9)-[histone H3] + 3 S-adenosyl-L-methionine = N(6),N(6),N(6)-trimethyl-L-lysyl(9)-[histone H3] + 3 S-adenosyl-L-homocysteine + 3 H(+). The enzyme catalyses L-lysyl(20)-[histone H4] + S-adenosyl-L-methionine = N(6)-methyl-L-lysyl(20)-[histone H4] + S-adenosyl-L-homocysteine + H(+). It carries out the reaction N(6)-methyl-L-lysyl(20)-[histone H4] + S-adenosyl-L-methionine = N(6),N(6)-dimethyl-L-lysyl(20)-[histone H4] + S-adenosyl-L-homocysteine + H(+). In terms of biological role, histone methyltransferase that sequentially mono-, di-, and tri-methylates both 'Lys-4' (H3K4) and 'Lys-36' (H3K36) of histone H3 to produce respectively trimethylated 'Lys-4' (H3K4me3) and trimethylated 'Lys-36' (H3K36me3) histone H3 and plays a key role in meiotic prophase by determining hotspot localization thereby promoting meiotic recombination. Can also methylate all four core histones with H3 being the best substrate and the most highly modified. Is also able, on one hand, to mono and di-methylate H4K20 and on other hand to trimethylate H3K9 with the di-methylated H3K9 as the best substrate. During meiotic prophase, binds specific DNA sequences through its zinc finger domains thereby determining hotspot localization where it promotes local H3K4me3 and H3K36me3 enrichment on the same nucleosomes through its histone methyltransferase activity. Thereby promotes double-stranded breaks (DSB) formation, at this subset of PRDM9-binding sites, that initiates meiotic recombination for the proper meiotic progression. During meiotic progression hotspot-bound PRDM9 interacts with several complexes; in early leptonema binds CDYL and EHMT2 followed by EWSR1 and CXXC1 by the end of leptonema. EWSR1 joins PRDM9 with the chromosomal axis through REC8. In this way, controls the DSB repair pathway, pairing of homologous chromosomes and sex body formation. Moreover plays a central role in the transcriptional activation of genes during early meiotic prophase thanks to H3K4me3 and H3K36me3 enrichment that represents a specific tag for epigenetic transcriptional activation. In addition performs automethylation. Acetylation and phosphorylation of histone H3 attenuate or prevent histone H3 methylation. This is Histone-lysine N-methyltransferase PRDM9 from Rattus norvegicus (Rat).